Consider the following 348-residue polypeptide: Growth-regulating factor 5 (348 aa).

Residues 24 to 59 (VFTAAQWAELEQQALIYKYLVAGVPVPGDLLLPIRP) enclose the QLQ domain. Short sequence motifs (bipartite nuclear localization signal) lie at residues 94–112 (KKLD…KKWR) and 130–137 (RGRNRSRK). Positions 97–141 (DPEPWRCRRTDGKKWRCSKEAHPDSKYCERHMHRGRNRSRKPVES) constitute a WRC domain. Disordered regions lie at residues 125–165 (ERHM…HDTD) and 306–348 (LRPF…PRCD). Residues 127–136 (HMHRGRNRSR) show a composition bias toward basic residues. Residues 148–161 (PQSQPQLSNVTTAT) are compositionally biased toward polar residues. Residues 306–320 (LRPFFDEWPGRRDSW) are compositionally biased toward basic and acidic residues. Over residues 329–340 (NQTSFSTTQLSI) the composition is skewed to polar residues.

Belongs to the GRF family.

The protein localises to the nucleus. In terms of biological role, transcription activator that plays a regulatory role in gibberellin-induced stem elongation. The sequence is that of Growth-regulating factor 5 (GRF5) from Oryza sativa subsp. japonica (Rice).